A 292-amino-acid chain; its full sequence is tRNA (guanine-N(7)-)-methyltransferase (292 aa).

The disordered stretch occupies residues 1-54; sequence MLKRDQSEMDIEAETANMGKEEKESFVHKRQKYRQEQEEKRLAAKKGVSFEQPE. The span at 19 to 42 shows a compositional bias: basic and acidic residues; that stretch reads GKEEKESFVHKRQKYRQEQEEKRL. S-adenosyl-L-methionine is bound by residues Gly-110, 133–134, 168–169, and Cys-188; these read EI and NA. Asp-191 is an active-site residue. 266-268 contacts S-adenosyl-L-methionine; sequence TEE.

The protein belongs to the class I-like SAM-binding methyltransferase superfamily. TrmB family. As to quaternary structure, forms a complex with TRM82.

It is found in the nucleus. It carries out the reaction guanosine(46) in tRNA + S-adenosyl-L-methionine = N(7)-methylguanosine(46) in tRNA + S-adenosyl-L-homocysteine. It functions in the pathway tRNA modification; N(7)-methylguanine-tRNA biosynthesis. Its function is as follows. Catalyzes the formation of N(7)-methylguanine at position 46 (m7G46) in tRNA. The chain is tRNA (guanine-N(7)-)-methyltransferase from Yarrowia lipolytica (strain CLIB 122 / E 150) (Yeast).